A 432-amino-acid chain; its full sequence is 3-phosphoshikimate 1-carboxyvinyltransferase (432 aa).

3-phosphoshikimate is bound by residues Lys22, Ser23, and Arg27. Lys22 contributes to the phosphoenolpyruvate binding site. Positions 96 and 127 each coordinate phosphoenolpyruvate. Positions 173, 174, 175, 201, 316, 339, and 343 each coordinate 3-phosphoshikimate. Position 175 (Gln175) interacts with phosphoenolpyruvate. Asp316 serves as the catalytic Proton acceptor. Phosphoenolpyruvate contacts are provided by Arg347, Arg391, and Lys416.

The protein belongs to the EPSP synthase family. As to quaternary structure, monomer.

The protein resides in the cytoplasm. The enzyme catalyses 3-phosphoshikimate + phosphoenolpyruvate = 5-O-(1-carboxyvinyl)-3-phosphoshikimate + phosphate. Its pathway is metabolic intermediate biosynthesis; chorismate biosynthesis; chorismate from D-erythrose 4-phosphate and phosphoenolpyruvate: step 6/7. Catalyzes the transfer of the enolpyruvyl moiety of phosphoenolpyruvate (PEP) to the 5-hydroxyl of shikimate-3-phosphate (S3P) to produce enolpyruvyl shikimate-3-phosphate and inorganic phosphate. The polypeptide is 3-phosphoshikimate 1-carboxyvinyltransferase (Histophilus somni (Haemophilus somnus)).